Consider the following 365-residue polypeptide: 5-hydroxytryptamine receptor 1E (365 aa).

Topologically, residues 1–21 (MNITNCTTEASMAIRPKTITE) are extracellular. Asparagine 2 and asparagine 5 each carry an N-linked (GlcNAc...) asparagine glycan. A helical transmembrane segment spans residues 22–45 (KMLICMTLVVITTLTTLLNLAVIM). Topologically, residues 46 to 59 (AIGTTKKLHQPANY) are cytoplasmic. Residues 60-84 (LICSLAVTDLLVAVLVMPLSIIYIV) traverse the membrane as a helical segment. Topologically, residues 85–92 (MDRWKLGY) are extracellular. A helical membrane pass occupies residues 93-118 (FLCEVWLSVDMTCCTCSILHLCVIAL). Cysteine 95 and cysteine 173 form a disulfide bridge. 2 residues coordinate serotonin: aspartate 102 and cysteine 106. The DRY motif; important for ligand-induced conformation changes motif lies at 119–121 (DRY). Topologically, residues 119-138 (DRYWAITNAIEYARKRTAKR) are cytoplasmic. The helical transmembrane segment at 139-157 (AALMILTVWTISIFISMPP) threads the bilayer. Topologically, residues 158–179 (LFWRSHRRLSPPPSQCTIQHDH) are extracellular. A helical transmembrane segment spans residues 180–203 (VIYTIYSTLGAFYIPLTLILILYY). The Cytoplasmic portion of the chain corresponds to 204 to 291 (RIYHAAKSLY…SSTRERKAAR (88 aa)). Residues 292 to 316 (ILGLILGAFILSWLPFFIKELIVGL) form a helical membrane-spanning segment. Over 317–322 (SIYTVS) the chain is Extracellular. Residues 323 to 345 (SEVADFLTWLGYVNSLINPLLYT) form a helical membrane-spanning segment. The NPxxY motif; important for ligand-induced conformation changes and signaling signature appears at 340–344 (NPLLY). Topologically, residues 346–365 (SFNEDFKLAFKKLIRCREHT) are cytoplasmic.

It belongs to the G-protein coupled receptor 1 family. In terms of tissue distribution, detected in brain.

It is found in the cell membrane. Functionally, G-protein coupled receptor for 5-hydroxytryptamine (serotonin). Also functions as a receptor for various alkaloids and psychoactive substances. Ligand binding causes a conformation change that triggers signaling via guanine nucleotide-binding proteins (G proteins) and modulates the activity of downstream effectors, such as adenylate cyclase. HTR1E is coupled to G(i)/G(o) G alpha proteins and mediates inhibitory neurotransmission by inhibiting adenylate cyclase activity. The polypeptide is 5-hydroxytryptamine receptor 1E (Homo sapiens (Human)).